The primary structure comprises 546 residues: MKETNTQPLLSVRDLSVAFHQGGATSVAVDHVSFDLMPGEVVALVGESGSGKSVTANSILKLLPYPAASHPSGKILFDGKDMLTLPERALRAVRGNDITMIFQEPMTSLNPLHTIERQIGEILELHQAITGAEARQRTLELLLQVGIREPEKRLKAYPHELSGGQRQRVMIAMALANRPKLLIADEPTTALDVTVQAQILELLGDLKTQHGMSMLFITHDLGIVRKFADRVCVMTKGKIVETGTVEQVFTDPQHAYTRHLLAAEPKGEPPHSDASKPVVMQGDDIKVWFPIKAGLMRRVIDHVKAVDGIDITLRAGQTVGVVGESGSGKTTLGLALSRLIASKGRISFIGQSIDSYSYEMMKPLRNRLQVVFQDPYGSLSPRMSVGEIIAEGLKVHERSLSADERDTRVATALEEVGLDPATRWRYPHEFSGGQRQRIAIARAMVLKPRFVMLDEPTSALDMSVQAQVVDLLRDLQAKHELAYLFISHDLRVVKALANDLIVMRHGKVVESGPAAEIFANPQQDYTKALLAAAFNIEAVETKAVSQ.

ABC transporter domains follow at residues 12 to 261 (VRDL…RHLL) and 291 to 530 (IKAG…KALL). Residues 46–53 (GESGSGKS) and 323–330 (GESGSGKT) contribute to the ATP site.

This sequence belongs to the ABC transporter superfamily. In terms of assembly, the complex is composed of one ATP-binding protein (YejF), two transmembrane proteins (YejB and YejE) and a solute-binding protein (YepA or YejA).

The protein localises to the cell inner membrane. Its function is as follows. Part of the ABC transporter complex YejBEF-YepA involved in the uptake of muropeptides, the breakdown products of cell wall peptidoglycan. The import of muropeptides into the cell enables peptidoglycan recycling, which is vital for cell wall integrity in this bacterium. Is also probably part of the ABC transporter complex YejABEF, which is likely involved in broad-spectrum peptide import. Responsible for energy coupling to the transport system. The sequence is that of Peptidoglycan transport ATP-binding protein YejF from Agrobacterium fabrum (strain C58 / ATCC 33970) (Agrobacterium tumefaciens (strain C58)).